A 316-amino-acid polypeptide reads, in one-letter code: Putative ring-cleaving dioxygenase MhqA (316 aa).

2 VOC domains span residues 5-131 and 154-278; these read GIHH…LTAD and GLGP…LSTD. Residues His8, His226, and Glu274 each coordinate Fe cation.

Belongs to the extradiol ring-cleavage dioxygenase family. Fe(2+) serves as cofactor.

It is found in the cytoplasm. Its function is as follows. Putative ring-cleavage dioxygenase that may contribute to the degradation of aromatic compounds. The polypeptide is Putative ring-cleaving dioxygenase MhqA (mhqA) (Bacillus subtilis (strain 168)).